Reading from the N-terminus, the 229-residue chain is MARLALSPVPSHWMVALLLLLSAEPVPAARSEDRYRNPKGSACSRIWQSPRFIARKRGFTVKMHCYMNSASGNVSWLWKQEMDENPQQLKLEKGRMEESQNESLATLTIQGIRFEDNGIYFCQQKCNNTSEVYQGCGTELRVMGFSTLAQLKQRNTLKDGIIMIQTLLIILFIIVPIFLLLDKDDSKAGMEEDHTYEGLDIDQTATYEDIVTLRTGEVKWSVGEHPGQE.

Residues 1 to 28 (MARLALSPVPSHWMVALLLLLSAEPVPA) form the signal peptide. Residues 29 to 159 (ARSEDRYRNP…QLKQRNTLKD (131 aa)) are Extracellular-facing. Residues 38–138 (PKGSACSRIW…TSEVYQGCGT (101 aa)) form the Ig-like V-type domain. Cystine bridges form between Cys-43-Cys-126 and Cys-65-Cys-122. N-linked (GlcNAc...) asparagine glycosylation is found at Asn-73, Asn-101, Asn-127, and Asn-128. The chain crosses the membrane as a helical span at residues 160-180 (GIIMIQTLLIILFIIVPIFLL). Over 181–229 (LDKDDSKAGMEEDHTYEGLDIDQTATYEDIVTLRTGEVKWSVGEHPGQE) the chain is Cytoplasmic. The ITAM domain maps to 185–213 (DSKAGMEEDHTYEGLDIDQTATYEDIVTL). A phosphotyrosine; by SRC-type Tyr-kinases mark is found at Tyr-196 and Tyr-207.

As to quaternary structure, heterodimer of alpha and beta chains; disulfide-linked. Part of the B-cell antigen receptor complex where the alpha/beta chain heterodimer is non-covalently associated with an antigen-specific membrane-bound surface immunoglobulin of two heavy chains and two light chains. Interacts with LYN. Post-translationally, phosphorylated on tyrosine upon B-cell activation by SRC-type Tyr-kinases such as BLK, LYN and SYK. B-cells.

The protein localises to the cell membrane. In terms of biological role, required in cooperation with CD79A for initiation of the signal transduction cascade activated by the B-cell antigen receptor complex (BCR) which leads to internalization of the complex, trafficking to late endosomes and antigen presentation. Enhances phosphorylation of CD79A, possibly by recruiting kinases which phosphorylate CD79A or by recruiting proteins which bind to CD79A and protect it from dephosphorylation. The chain is B-cell antigen receptor complex-associated protein beta chain (CD79B) from Homo sapiens (Human).